The chain runs to 113 residues: uncharacterized protein (113 aa).

An SWIM-type zinc finger spans residues 49-91 (FFVVVGKEEYVVEGGFCTCPDFLVNLKGKSPCAHIIAVEVAKI).

This is an uncharacterized protein from Archaeoglobus fulgidus (strain ATCC 49558 / DSM 4304 / JCM 9628 / NBRC 100126 / VC-16).